We begin with the raw amino-acid sequence, 374 residues long: F-box/LRR-repeat protein 8 (374 aa).

An F-box domain is found at 2-48 (AEPGEGLPEEVLALIFRHLSLRDRAAAARVCRAWAAAATCSAVWHDT).

In terms of assembly, directly interacts with SKP1 and CUL1.

In terms of biological role, substrate-recognition component of the SCF (SKP1-CUL1-F-box protein)-type E3 ubiquitin ligase complex. The chain is F-box/LRR-repeat protein 8 (FBXL8) from Homo sapiens (Human).